Reading from the N-terminus, the 1517-residue chain is DNA-directed RNA polymerase subunit beta' (1517 aa).

Zn(2+) is bound by residues cysteine 71, cysteine 73, cysteine 86, and cysteine 89. The Mg(2+) site is built by aspartate 482, aspartate 484, and aspartate 486. Residues cysteine 812, cysteine 886, cysteine 893, and cysteine 896 each contribute to the Zn(2+) site.

This sequence belongs to the RNA polymerase beta' chain family. The RNAP catalytic core consists of 2 alpha, 1 beta, 1 beta' and 1 omega subunit. When a sigma factor is associated with the core the holoenzyme is formed, which can initiate transcription. It depends on Mg(2+) as a cofactor. Zn(2+) is required as a cofactor.

It catalyses the reaction RNA(n) + a ribonucleoside 5'-triphosphate = RNA(n+1) + diphosphate. DNA-dependent RNA polymerase catalyzes the transcription of DNA into RNA using the four ribonucleoside triphosphates as substrates. This is DNA-directed RNA polymerase subunit beta' from Campylobacter jejuni (strain RM1221).